A 492-amino-acid polypeptide reads, in one-letter code: Serine incorporator 4 (492 aa).

A run of 10 helical transmembrane segments spans residues Y59–V79, A113–V133, S148–P168, I179–A199, G219–F239, L254–I274, S281–L301, I330–A350, G421–F441, and V464–A484.

The protein belongs to the TDE1 family.

The protein localises to the membrane. Incorporates a polar amino acid serine into membranes and facilitates the synthesis of two serine-derived lipids, phosphatidylserine and sphingolipids. The sequence is that of Serine incorporator 4 (Serinc4) from Mus musculus (Mouse).